We begin with the raw amino-acid sequence, 495 residues long: Ribosomal protein uS12 methylthiotransferase RimO (495 aa).

One can recognise an MTTase N-terminal domain in the interval 5–121 (RTVALVTLGC…ISDRLQTILN (117 aa)). Positions 14, 50, and 84 each coordinate [4Fe-4S] cluster. The segment at 145–183 (QSAGADVALPGHGAPEGLPEDLPEGLAPESGPRAPLRRR) is disordered. One can recognise a Radical SAM core domain in the interval 184-415 (LDGSPVASVK…RLAEELVAQR (232 aa)). [4Fe-4S] cluster-binding residues include cysteine 198, cysteine 202, and cysteine 205. Residues 417–484 (EERVGETVHV…GVDLVAEPLP (68 aa)) form the TRAM domain.

Belongs to the methylthiotransferase family. RimO subfamily. [4Fe-4S] cluster is required as a cofactor.

It localises to the cytoplasm. It catalyses the reaction L-aspartate(89)-[ribosomal protein uS12]-hydrogen + (sulfur carrier)-SH + AH2 + 2 S-adenosyl-L-methionine = 3-methylsulfanyl-L-aspartate(89)-[ribosomal protein uS12]-hydrogen + (sulfur carrier)-H + 5'-deoxyadenosine + L-methionine + A + S-adenosyl-L-homocysteine + 2 H(+). Its function is as follows. Catalyzes the methylthiolation of an aspartic acid residue of ribosomal protein uS12. The protein is Ribosomal protein uS12 methylthiotransferase RimO of Streptomyces avermitilis (strain ATCC 31267 / DSM 46492 / JCM 5070 / NBRC 14893 / NCIMB 12804 / NRRL 8165 / MA-4680).